The chain runs to 155 residues: Cardioactive peptide (155 aa).

The signal sequence occupies residues 1-23; sequence MRTSMRISLRLLALLACAICSQA. A propeptide spanning residues 24 to 49 is cleaved from the precursor; it reads SLERENNEGTNMANHKLSGVIQWKYE. An intrachain disulfide couples cysteine 54 to cysteine 60. The residue at position 60 (cysteine 60) is a Cysteine amide. Positions 64–155 are excised as a propeptide; sequence RTYPSYPPFS…MQQLEERESK (92 aa). A disordered region spans residues 135 to 155; sequence NKQKMLQNEKEMQQLEERESK. Residues 141 to 155 show a composition bias toward basic and acidic residues; the sequence is QNEKEMQQLEERESK.

In terms of tissue distribution, central nervous system; most neurons exhibit coexpression with Burs.

Its subcellular location is the secreted. Cardioregulatory neurohormone that increases heart beat rate during adult wing inflation; has no effect on beat amplitude. The effect of CCAP is both ino- and chronotropic. This chain is Cardioactive peptide, found in Drosophila melanogaster (Fruit fly).